A 245-amino-acid chain; its full sequence is tRNA (guanine-N(1)-)-methyltransferase (245 aa).

Residues Gly113 and 133–138 (IGDYVL) contribute to the S-adenosyl-L-methionine site.

The protein belongs to the RNA methyltransferase TrmD family. In terms of assembly, homodimer.

The protein localises to the cytoplasm. It carries out the reaction guanosine(37) in tRNA + S-adenosyl-L-methionine = N(1)-methylguanosine(37) in tRNA + S-adenosyl-L-homocysteine + H(+). Functionally, specifically methylates guanosine-37 in various tRNAs. This Actinobacillus succinogenes (strain ATCC 55618 / DSM 22257 / CCUG 43843 / 130Z) protein is tRNA (guanine-N(1)-)-methyltransferase.